The following is a 195-amino-acid chain: Imidazole glycerol phosphate synthase subunit HisH (195 aa).

The Glutamine amidotransferase type-1 domain maps to 1–195 (MIAVVDLGIG…LRLLENFRRL (195 aa)). Cysteine 72 acts as the Nucleophile in catalysis. Active-site residues include histidine 177 and glutamate 179.

As to quaternary structure, heterodimer of HisH and HisF.

It is found in the cytoplasm. It catalyses the reaction 5-[(5-phospho-1-deoxy-D-ribulos-1-ylimino)methylamino]-1-(5-phospho-beta-D-ribosyl)imidazole-4-carboxamide + L-glutamine = D-erythro-1-(imidazol-4-yl)glycerol 3-phosphate + 5-amino-1-(5-phospho-beta-D-ribosyl)imidazole-4-carboxamide + L-glutamate + H(+). The catalysed reaction is L-glutamine + H2O = L-glutamate + NH4(+). Its pathway is amino-acid biosynthesis; L-histidine biosynthesis; L-histidine from 5-phospho-alpha-D-ribose 1-diphosphate: step 5/9. Functionally, IGPS catalyzes the conversion of PRFAR and glutamine to IGP, AICAR and glutamate. The HisH subunit catalyzes the hydrolysis of glutamine to glutamate and ammonia as part of the synthesis of IGP and AICAR. The resulting ammonia molecule is channeled to the active site of HisF. The chain is Imidazole glycerol phosphate synthase subunit HisH from Thermococcus kodakarensis (strain ATCC BAA-918 / JCM 12380 / KOD1) (Pyrococcus kodakaraensis (strain KOD1)).